Consider the following 138-residue polypeptide: Large ribosomal subunit protein uL14 (138 aa).

This sequence belongs to the universal ribosomal protein uL14 family. As to quaternary structure, part of the 50S ribosomal subunit. Forms a cluster with proteins L3 and L24e, part of which may contact the 16S rRNA in 2 intersubunit bridges. Contacts initiation factor aIF-6.

The protein resides in the cytoplasm. In terms of biological role, binds to 23S rRNA. Forms part of two intersubunit bridges in the 70S ribosome. This Saccharolobus solfataricus (strain ATCC 35092 / DSM 1617 / JCM 11322 / P2) (Sulfolobus solfataricus) protein is Large ribosomal subunit protein uL14.